Reading from the N-terminus, the 103-residue chain is Turripeptide OL55-like (103 aa).

In terms of processing, contains 8 disulfide bonds. Expressed by the venom duct.

It is found in the secreted. Its function is as follows. Acts as a neurotoxin by inhibiting an ion channel. This Lophiotoma albina (Sea snail) protein is Turripeptide OL55-like.